The sequence spans 2890 residues: Bifunctional DNA-directed RNA polymerase subunit beta-beta' (2890 aa).

The segment at 1-1377 is DNA-directed RNA polymerase subunit beta; the sequence is MSKKIPLKNR…DINIFGDDVD (1377 aa). A DNA-directed RNA polymerase subunit beta' region spans residues 1384 to 2890; the sequence is PIVIKEDDRP…LRTLEDGPKF (1507 aa). Cys-1449, Cys-1451, Cys-1465, and Cys-1468 together coordinate Zn(2+). Mg(2+) contacts are provided by Asp-1849, Asp-1851, and Asp-1853. Residues Cys-2179, Cys-2253, Cys-2260, and Cys-2263 each coordinate Zn(2+).

This sequence in the N-terminal section; belongs to the RNA polymerase beta chain family. In the C-terminal section; belongs to the RNA polymerase beta' chain family. The RNAP catalytic core consists of 2 alpha, 1 beta/beta' and 1 omega subunit. When a sigma factor is associated with the core the holoenzyme is formed, which can initiate transcription. It depends on Mg(2+) as a cofactor. Requires Zn(2+) as cofactor.

The catalysed reaction is RNA(n) + a ribonucleoside 5'-triphosphate = RNA(n+1) + diphosphate. DNA-dependent RNA polymerase catalyzes the transcription of DNA into RNA using the four ribonucleoside triphosphates as substrates. This chain is Bifunctional DNA-directed RNA polymerase subunit beta-beta' (rpoBC), found in Helicobacter pylori (strain HPAG1).